The chain runs to 481 residues: Ribosomal RNA small subunit methyltransferase F (481 aa).

Residues 125 to 131, E149, D176, and D194 each bind S-adenosyl-L-methionine; that span reads AAAPGSK. C247 acts as the Nucleophile in catalysis.

It belongs to the class I-like SAM-binding methyltransferase superfamily. RsmB/NOP family.

Its subcellular location is the cytoplasm. The enzyme catalyses cytidine(1407) in 16S rRNA + S-adenosyl-L-methionine = 5-methylcytidine(1407) in 16S rRNA + S-adenosyl-L-homocysteine + H(+). Its function is as follows. Specifically methylates the cytosine at position 1407 (m5C1407) of 16S rRNA. The sequence is that of Ribosomal RNA small subunit methyltransferase F from Psychromonas ingrahamii (strain DSM 17664 / CCUG 51855 / 37).